Consider the following 84-residue polypeptide: Cytoplasmic envelopment protein 3 (84 aa).

A lipid anchor (N-myristoyl glycine; by host) is attached at G2. The asp/Glu-rich (acidic) stretch occupies residues D40–C46.

It belongs to the herpesviridae cytoplasmic envelopment protein 3 family. In terms of assembly, interacts with cytoplasmic envelopment protein 2; this interaction is essential for the proper localization of each protein to the assembly complex and thus for the production of infectious virus. Post-translationally, myristoylation and palmitoylation (probably on one or more of the nearby cysteines at the N-terminus) enable membrane-binding and Golgi apparatus-specific targeting and are essential for efficient packaging. Phosphorylated. Phosphorylation does not seem to be required for recycling to the host Golgi apparatus. Packaging is selective for underphosphorylated forms.

Its subcellular location is the virion tegument. The protein localises to the virion membrane. It localises to the host cell membrane. It is found in the host Golgi apparatus membrane. Its function is as follows. Plays an important role in the cytoplasmic envelopment of tegument proteins and capsids during the assembly and egress processes. Also participates in viral entry at the fusion step probably by regulating the core fusion machinery. This Gallus gallus (Chicken) protein is Cytoplasmic envelopment protein 3 (MDV023).